Consider the following 131-residue polypeptide: Sec-independent protein translocase protein TatB (131 aa).

The chain crosses the membrane as a helical span at residues 2-22; that stretch reads LGSLSWEHMLVLVVVGLVVLG. Residues 96–131 form a disordered region; the sequence is AFDRPVNGAAAQPPPAPAPPPEPHRSGQTPFDADAT. The span at 107–116 shows a compositional bias: pro residues; the sequence is QPPPAPAPPP.

This sequence belongs to the TatB family. The Tat system comprises two distinct complexes: a TatABC complex, containing multiple copies of TatA, TatB and TatC subunits, and a separate TatA complex, containing only TatA subunits. Substrates initially bind to the TatABC complex, which probably triggers association of the separate TatA complex to form the active translocon.

The protein localises to the cell membrane. In terms of biological role, part of the twin-arginine translocation (Tat) system that transports large folded proteins containing a characteristic twin-arginine motif in their signal peptide across membranes. Together with TatC, TatB is part of a receptor directly interacting with Tat signal peptides. TatB may form an oligomeric binding site that transiently accommodates folded Tat precursor proteins before their translocation. The polypeptide is Sec-independent protein translocase protein TatB (Mycolicibacterium paratuberculosis (strain ATCC BAA-968 / K-10) (Mycobacterium paratuberculosis)).